Consider the following 338-residue polypeptide: RNA 3'-terminal phosphate cyclase (338 aa).

ATP contacts are provided by residues glutamine 103 and tyrosine 283–glutamine 287. The Tele-AMP-histidine intermediate role is filled by histidine 308.

This sequence belongs to the RNA 3'-terminal cyclase family. Type 1 subfamily.

Its subcellular location is the cytoplasm. It catalyses the reaction a 3'-end 3'-phospho-ribonucleotide-RNA + ATP = a 3'-end 2',3'-cyclophospho-ribonucleotide-RNA + AMP + diphosphate. Functionally, catalyzes the conversion of 3'-phosphate to a 2',3'-cyclic phosphodiester at the end of RNA. The mechanism of action of the enzyme occurs in 3 steps: (A) adenylation of the enzyme by ATP; (B) transfer of adenylate to an RNA-N3'P to produce RNA-N3'PP5'A; (C) and attack of the adjacent 2'-hydroxyl on the 3'-phosphorus in the diester linkage to produce the cyclic end product. The biological role of this enzyme is unknown but it is likely to function in some aspects of cellular RNA processing. The polypeptide is RNA 3'-terminal phosphate cyclase (Shigella boydii serotype 18 (strain CDC 3083-94 / BS512)).